A 360-amino-acid polypeptide reads, in one-letter code: UDP-N-acetylglucosamine--N-acetylmuramyl-(pentapeptide) pyrophosphoryl-undecaprenol N-acetylglucosamine transferase (360 aa).

The UDP-N-acetyl-alpha-D-glucosamine site is built by S198 and Q289.

The protein belongs to the glycosyltransferase 28 family. MurG subfamily.

It localises to the cell membrane. It carries out the reaction Mur2Ac(oyl-L-Ala-gamma-D-Glu-L-Lys-D-Ala-D-Ala)-di-trans,octa-cis-undecaprenyl diphosphate + UDP-N-acetyl-alpha-D-glucosamine = beta-D-GlcNAc-(1-&gt;4)-Mur2Ac(oyl-L-Ala-gamma-D-Glu-L-Lys-D-Ala-D-Ala)-di-trans,octa-cis-undecaprenyl diphosphate + UDP + H(+). The protein operates within cell wall biogenesis; peptidoglycan biosynthesis. Its function is as follows. Cell wall formation. Catalyzes the transfer of a GlcNAc subunit on undecaprenyl-pyrophosphoryl-MurNAc-pentapeptide (lipid intermediate I) to form undecaprenyl-pyrophosphoryl-MurNAc-(pentapeptide)GlcNAc (lipid intermediate II). This Streptococcus pyogenes serotype M49 (strain NZ131) protein is UDP-N-acetylglucosamine--N-acetylmuramyl-(pentapeptide) pyrophosphoryl-undecaprenol N-acetylglucosamine transferase.